The following is a 146-amino-acid chain: Prepilin peptidase-dependent protein D (146 aa).

A propeptide spans 1 to 6 (MDKQRG) (leader sequence). F7 carries the post-translational modification N-methylphenylalanine. The helical transmembrane segment at 7–27 (FTLIELMVVIGIIAILSAIGI) threads the bilayer.

Belongs to the N-Me-Phe pilin family.

It is found in the fimbrium. It localises to the membrane. In terms of biological role, major component of the type IV pilus (T4P) that plays a role in cell adhesion and motility. Not produced when grown under standard laboratory conditions. This chain is Prepilin peptidase-dependent protein D (ppdD), found in Escherichia coli (strain K12).